The following is a 478-amino-acid chain: Aspartyl/glutamyl-tRNA(Asn/Gln) amidotransferase subunit B (478 aa).

The protein belongs to the GatB/GatE family. GatB subfamily. Heterotrimer of A, B and C subunits.

It catalyses the reaction L-glutamyl-tRNA(Gln) + L-glutamine + ATP + H2O = L-glutaminyl-tRNA(Gln) + L-glutamate + ADP + phosphate + H(+). The enzyme catalyses L-aspartyl-tRNA(Asn) + L-glutamine + ATP + H2O = L-asparaginyl-tRNA(Asn) + L-glutamate + ADP + phosphate + 2 H(+). Its function is as follows. Allows the formation of correctly charged Asn-tRNA(Asn) or Gln-tRNA(Gln) through the transamidation of misacylated Asp-tRNA(Asn) or Glu-tRNA(Gln) in organisms which lack either or both of asparaginyl-tRNA or glutaminyl-tRNA synthetases. The reaction takes place in the presence of glutamine and ATP through an activated phospho-Asp-tRNA(Asn) or phospho-Glu-tRNA(Gln). In Brevibacillus brevis (strain 47 / JCM 6285 / NBRC 100599), this protein is Aspartyl/glutamyl-tRNA(Asn/Gln) amidotransferase subunit B.